A 1107-amino-acid chain; its full sequence is Miniconductance mechanosensitive channel MscM (1107 aa).

Positions Met1 to Ala19 are cleaved as a signal peptide. Transmembrane regions (helical) follow at residues Val467–Gly487, Leu522–Gly542, Leu551–Ile571, Tyr600–Leu620, Ser628–Leu648, Met674–Ala694, Leu698–Ile718, Ile785–Phe805, Pro828–Val848, Thr875–Ile895, and Gly910–Phe930.

The protein belongs to the MscS (TC 1.A.23) family. In terms of assembly, homoheptamer.

It is found in the cell inner membrane. Functionally, mechanosensitive channel that protects cells against hypoosmotic stress when highly overexpressed. Gates spontaneously in response to increased membrane tension. The chain is Miniconductance mechanosensitive channel MscM (mscM) from Escherichia coli (strain K12).